We begin with the raw amino-acid sequence, 146 residues long: Hemoglobin subunit beta (146 aa).

The residue at position 1 (V1) is an N-acetylvaline. Residues 2 to 146 (HLTDGEKNAL…VANALAHKYH (145 aa)) enclose the Globin domain. Position 44 is a phosphoserine (S44). K59 is subject to N6-acetyllysine. H63 contributes to the heme b binding site. N6-acetyllysine is present on K82. H92 contacts heme b. The residue at position 93 (C93) is an S-nitrosocysteine. Position 144 is an N6-acetyllysine (K144).

Belongs to the globin family. Heterotetramer of two alpha chains and two beta chains. Red blood cells.

Involved in oxygen transport from the lung to the various peripheral tissues. The sequence is that of Hemoglobin subunit beta from Otospermophilus beecheyi (California ground squirrel).